Here is a 480-residue protein sequence, read N- to C-terminus: PTS system sucrose-specific EIIBC component (480 aa).

The region spanning 4-87 is the PTS EIIB type-1 domain; sequence KKSAENILQA…EKITGKEASS (84 aa). The Phosphocysteine intermediate; for EIIB activity role is filled by C26. 8 helical membrane-spanning segments follow: residues 109–129, 158–178, 182–202, 264–284, 303–323, 349–369, 405–425, and 449–469; these read LSDIFVPIIPAIVAGGLLMGI, MINIFANAPFTLLPILIGFSA, FGGNAYLGAALGMILVHPELM, LLTPLLAILSTGFITFSFVGP, FGGAIGGLIFGLLYAPIVITG, PIATMSNIAQGAAALAAFFII, PFIGAIVGSGIGSAYIAFFKV, and LHYGIAMIIAFIVAFGVTYAL. The 361-residue stretch at 120–480 folds into the PTS EIIC type-1 domain; that stretch reads IVAGGLLMGI…YRKKYRNIEA (361 aa).

It is found in the cell membrane. The enzyme catalyses N(pros)-phospho-L-histidyl-[protein](out) + sucrose = sucrose 6(G)-phosphate(in) + L-histidyl-[protein]. Its function is as follows. The phosphoenolpyruvate-dependent sugar phosphotransferase system (sugar PTS), a major carbohydrate active transport system, catalyzes the phosphorylation of incoming sugar substrates concomitantly with their translocation across the cell membrane. This system is involved in sucrose transport. This chain is PTS system sucrose-specific EIIBC component, found in Staphylococcus xylosus.